Here is a 361-residue protein sequence, read N- to C-terminus: POU domain, class 3, transcription factor 4 (361 aa).

Disordered stretches follow at residues 99–131 and 144–192; these read PHVA…GQPL and MLEH…PTSD. The segment covering 122 to 131 has biased composition (polar residues); it reads PSITSSGQPL. Over residues 165–183 the composition is skewed to basic and acidic residues; that stretch reads VLREPPDHGELGSHHCQDH. The region spanning 186–260 is the POU-specific domain; that stretch reads EETPTSDELE…LLNKWLEEAD (75 aa). Serine 265 is subject to Phosphoserine. The homeobox DNA-binding region spans 278 to 337; that stretch reads KRKKRTSIEVSVKGVLETHFLKCPKPAAQEISSLADSLQLEKEVVRVWFCNRRQKEKRMT.

It belongs to the POU transcription factor family. Class-3 subfamily. In terms of assembly, interacts with HNRNPU. As to expression, brain specific.

The protein resides in the nucleus. Its function is as follows. Probable transcription factor which exert its primary action widely during early neural development and in a very limited set of neurons in the mature brain. The sequence is that of POU domain, class 3, transcription factor 4 (POU3F4) from Homo sapiens (Human).